A 309-amino-acid chain; its full sequence is uncharacterized protein (309 aa).

3 Solcar repeats span residues 6–83 (SDLY…LCHS), 97–211 (LTGY…FKRL), and 216–302 (NDKA…VSLL). 6 helical membrane-spanning segments follow: residues 12 to 32 (ITAG…FEYL), 47 to 67 (IILP…VAAF), 100 to 120 (YNLL…IIPF), 184 to 204 (VQGT…QFTA), 222 to 242 (VITG…IDVV), and 285 to 305 (VGIS…LLGF).

This sequence belongs to the mitochondrial carrier (TC 2.A.29) family.

The protein resides in the mitochondrion inner membrane. This is an uncharacterized protein from Saccharomyces cerevisiae (strain ATCC 204508 / S288c) (Baker's yeast).